A 215-amino-acid chain; its full sequence is MPAFNRLFPLASLLLILWVGVCFPVCVEVPSETEAVQGNPMKLRCISCMKREEVEATTVVEWFYRPEGGKDFLIYEYRNGHQEVESPFQGRLQWNGSKDLQDVSITVLNVTLNDSGLYTCNVSREFEFEAHRPFVKTTRLIPLRVTEEAGEDFTSVVSEIMMYILLVFLTLWLLIEMIYCYRKVSKAEEAAQENASDYLAIPSENKENSAVPVEE.

A signal peptide spans 1–22; it reads MPAFNRLFPLASLLLILWVGVC. Topologically, residues 23 to 156 are extracellular; sequence FPVCVEVPSE…EEAGEDFTSV (134 aa). Intrachain disulfides connect Cys26–Cys48 and Cys45–Cys120. The region spanning 32–154 is the Ig-like C2-type domain; it reads ETEAVQGNPM…VTEEAGEDFT (123 aa). 4 N-linked (GlcNAc...) asparagine glycosylation sites follow: Asn95, Asn109, Asn113, and Asn121. Residues 157–178 traverse the membrane as a helical segment; the sequence is VSEIMMYILLVFLTLWLLIEMI. Residues 179-215 are Cytoplasmic-facing; it reads YCYRKVSKAEEAAQENASDYLAIPSENKENSAVPVEE.

The protein belongs to the sodium channel auxiliary subunit SCN3B (TC 8.A.17) family. A voltage-gated sodium (Nav) channel consists of an ion-conducting pore-forming alpha subunit functional on its own that is regulated by one or more beta subunits. Forms homodimers and homotrimers. SCN3B is non-covalently associated with alpha subunits and induces the formation of alpha subunit oligomers, including trimers. Interacts with SCN5A/Nav1.5; regulatory subunit of SCN5A/Nav1.5. Interacts with SCN7A/Nav2.1; probable regulatory subunit of SCN7A/Nav2.1. Interacts with SCN10A; regulatory subunit of SCN10A/Nav1.8. Interacts with NFASC; probably involved in targeting the sodium channels to the nodes of Ranvier. Post-translationally, intramolecular disulfide bonds favor the voltage-gated sodium channel oligomeric complex assembly. N-glycosylated.

Its subcellular location is the cell membrane. Regulatory subunit of multiple voltage-gated sodium (Nav) channels directly mediating the depolarization of excitable membranes. Navs, also called VGSCs (voltage-gated sodium channels) or VDSCs (voltage-dependent sodium channels), operate by switching between closed and open conformations depending on the voltage difference across the membrane. In the open conformation they allow Na(+) ions to selectively pass through the pore, along their electrochemical gradient. The influx of Na+ ions provokes membrane depolarization, initiating the propagation of electrical signals throughout cells and tissues. The accessory beta subunits participate in localization and functional modulation of the Nav channels. Modulates the activity of SCN2A/Nav1.2, causing a hyperpolarizing shift in the voltage-dependence of inactivation of the channel and increasing the fraction of channels operating in the fast gating mode. Modulates the activity of SCN5A/Nav1.5. Could also regulate the atypical sodium channel SCN7A/Nav2.1. Modulates the activity of SCN10A/Nav1.8, regulating its oligomerization and accelerating the recovery from inactivation. The polypeptide is Sodium channel regulatory subunit beta-3 (Bos taurus (Bovine)).